A 1062-amino-acid chain; its full sequence is SLIT-ROBO Rho GTPase-activating protein 1 (1062 aa).

An F-BAR domain is found at 19–314 (SQVKEIRAQL…AVDNLEPRSD (296 aa)). Residues 352–382 (QAELMLRNQQLQSRLATLKIESEEVKKTTEA) adopt a coiled-coil conformation. Serine 416 carries the phosphoserine modification. The Rho-GAP domain maps to 481-671 (GRRNSHARHQ…TIIIHHETIF (191 aa)). The SH3 domain occupies 720-779 (CEPIEAIAKFDYVGRSARELSFKKGASLLLYHRASEDWWEGRHNGIDGLVPHQYIVVQDM). Over residues 785–799 (DTLSQKADSEASSGP) the composition is skewed to polar residues. Residues 785–931 (DTLSQKADSE…TGFNDHKPLD (147 aa)) are disordered. Phosphoserine is present on residues serine 812 and serine 894. The span at 899–908 (SRHDSLKKID) shows a compositional bias: basic and acidic residues. At serine 909 the chain carries Phosphoserine. The span at 914-923 (RSTSSGQYTG) shows a compositional bias: polar residues. Residues 933–960 (ETIAQDIEETMNTALNELRELERQSTVK) are a coiled coil. The segment covering 974-988 (KNSPTPATSTESLSP) has biased composition (polar residues). 2 disordered regions span residues 974–1013 (KNSPTPATSTESLSPLHNVALRGSEPQIRRSTSSSSETMS) and 1028–1062 (KPPALRPKPAVLPKTNPTMGPAAPSQGPTDKSCTM). Phosphoserine is present on serine 976. Threonine 978 carries the post-translational modification Phosphothreonine. The span at 1004–1013 (STSSSSETMS) shows a compositional bias: low complexity. The residue at position 1009 (serine 1009) is a Phosphoserine. Over residues 1053 to 1062 (QGPTDKSCTM) the composition is skewed to polar residues.

In terms of assembly, homodimer. Forms a heterooligomer with SRGAP2 and SRGAP3 through its F-BAR domain. Interacts with CDC42 and RHOA. Interacts with FASLG. Interacts (via SH3 domain) with ROBO1.

Its function is as follows. GTPase-activating protein for RhoA and Cdc42 small GTPases. Together with CDC42 seems to be involved in the pathway mediating the repulsive signaling of Robo and Slit proteins in neuronal migration. SLIT2, probably through interaction with ROBO1, increases the interaction of SRGAP1 with ROBO1 and inactivates CDC42. The protein is SLIT-ROBO Rho GTPase-activating protein 1 (Srgap1) of Mus musculus (Mouse).